A 173-amino-acid chain; its full sequence is Cytochrome c-type biogenesis protein CcmE (173 aa).

Residues 1 to 8 (MNPRRKSR) are Cytoplasmic-facing. The chain crosses the membrane as a helical; Signal-anchor for type II membrane protein span at residues 9–29 (FKLVIFVVLGIAIASGLMLYA). At 30-173 (LRQNIDLFYT…RDRQEKEGAK (144 aa)) the chain is on the periplasmic side. Heme is bound by residues histidine 131 and tyrosine 135. Positions 139–173 (ELGEKMQKVHKPMGIKAADLKGESERDRQEKEGAK) are disordered. Basic and acidic residues predominate over residues 156-173 (ADLKGESERDRQEKEGAK).

The protein belongs to the CcmE/CycJ family.

Its subcellular location is the cell inner membrane. Heme chaperone required for the biogenesis of c-type cytochromes. Transiently binds heme delivered by CcmC and transfers the heme to apo-cytochromes in a process facilitated by CcmF and CcmH. In Haemophilus influenzae (strain 86-028NP), this protein is Cytochrome c-type biogenesis protein CcmE.